A 248-amino-acid polypeptide reads, in one-letter code: Probable transcriptional regulatory protein Psyr_1407 (248 aa).

This sequence belongs to the TACO1 family.

It localises to the cytoplasm. This Pseudomonas syringae pv. syringae (strain B728a) protein is Probable transcriptional regulatory protein Psyr_1407.